The sequence spans 209 residues: Large ribosomal subunit protein uL3 (209 aa).

N5-methylglutamine is present on glutamine 150.

The protein belongs to the universal ribosomal protein uL3 family. In terms of assembly, part of the 50S ribosomal subunit. Forms a cluster with proteins L14 and L19. Methylated by PrmB.

Functionally, one of the primary rRNA binding proteins, it binds directly near the 3'-end of the 23S rRNA, where it nucleates assembly of the 50S subunit. This chain is Large ribosomal subunit protein uL3, found in Vibrio vulnificus (strain CMCP6).